Reading from the N-terminus, the 139-residue chain is Thioredoxin-like protein Clot (139 aa).

Positions 1-136 (MTVEKVDATV…LADKVDAVVN (136 aa)) constitute a Thioredoxin domain. Catalysis depends on nucleophile residues cysteine 49 and cysteine 52. Cysteine 49 and cysteine 52 are disulfide-bonded.

Belongs to the thioredoxin family.

Probable thiol-disulfide oxidoreductase that may participate in various redox reactions. This is Thioredoxin-like protein Clot from Oryza sativa subsp. japonica (Rice).